Consider the following 517-residue polypeptide: Maturase K (517 aa).

The protein belongs to the intron maturase 2 family. MatK subfamily.

Its subcellular location is the plastid. The protein resides in the chloroplast. Functionally, usually encoded in the trnK tRNA gene intron. Probably assists in splicing its own and other chloroplast group II introns. In Juncus effusus (Soft rush), this protein is Maturase K.